A 250-amino-acid chain; its full sequence is Probable phosphatase VIBHAR_04983 (250 aa).

His8, His10, His16, His41, Glu74, His102, His132, Asp194, and His196 together coordinate Zn(2+).

It belongs to the PHP family. Requires Zn(2+) as cofactor.

The protein is Probable phosphatase VIBHAR_04983 of Vibrio campbellii (strain ATCC BAA-1116).